A 1038-amino-acid polypeptide reads, in one-letter code: MTHQTHTIAESNNFIVLDKYIKAEPTGDSYQSESDLERELIQDLRNQGYEFISVKSQSAMLANVREQLQNLNGVVFNDSEWRRFTEQYLDNPSDGILDKTRKIHIDYICDFIFDDERLENIYLIDKKNLMRNKVQIIQQFEQAGSHANRYDVTILVNGLPLVQIELKKRGVAIREAFNQIHRYSKESFNSENSLFKYLQLFVISNGTDTRYFANTTKRDKNSFDFTMNWAKSDNTLIKDLKDFTATCFQKHTLLNVLVNYSVFDSSQTLLVMRPYQIAATERILWKIKSSFTAKNWSKPESGGYIWHTTGSGKTLTSFKAARLATELDFIDKVFFVVDRKDLDYQTMKEYQRFSPDSVNGSENTAGLKRNLDKDDNKIIVTTIQKLNNLMKAESDLPVYNQQVVFIFDECHRSQFGEAQKNLKKKFKRYYQFGFTGTPIFPENALGSETTASVFGRELHSYVITDAIRDEKVLKFKVDYNDVRPQFKSLETETDEKKLSAAENQQAFLHPMRIQEITQYILNNFRQKTHRTFPGSKGFNAMLAVSSVDAAKAYYATFKRLQEEAANKSATYKPLRIATIFSFAANEEQNAIGEISDETFDTSAMDSSAKEFLDAAIREYNSHFKTNFSTDSNGFQNYYRDLAQRVKNQDIDLLIVVGMFLTGFDAPTLNTLFVDKNLRYHGLMQAFSRTNRIYDATKTFGNIVTFRDLERSTIDAITLFGDKNTKNVVLEKSYTEYMEGFTDAATGEAKRGFMTVVSELEQRFPDPTSIESEKEKKDFVKLFGEYLRAENILQNYDEFATLKALQQIDLSDPVAVEKFKAEHYVDDEKFAELQTIRLPADRKIQDYRSAYNDIRDWQRREKEAEKKEKSTTDWDDVVFEVDLLKSQEINLDYILGLIFEHNRQNKGKGEMIEEVKRLIRSSLGNRAKEGLVVDFIQQTNLDDLPDKASIIDAFFTFAQREQQREAEALIKEENLNEDAAKRYIRTSLKREYATENGTELNETLPKLSPLNPQYKTKKQAVFQKIVSFIEKFKGVGGKI.

Residues 31–249 (QSESDLEREL…LKDFTATCFQ (219 aa)) are nuclease domain. The tract at residues 250-469 (KHTLLNVLVN…SYVITDAIRD (220 aa)) is motor 1 domain. The Helicase ATP-binding domain maps to 294–439 (KNWSKPESGG…YQFGFTGTPI (146 aa)). Residue 307–314 (HTTGSGKT) participates in ATP binding. The short motif at 408–411 (DECH) is the DEAH box element. Positions 470-702 (EKVLKFKVDY…YDATKTFGNI (233 aa)) are motor 2 domain. The interval 720 to 732 (GDKNTKNVVLEKS) is motor 2-helicase linker. The helicase domain stretch occupies residues 732 to 860 (SYTEYMEGFT…NDIRDWQRRE (129 aa)). The helicase-CTD linker stretch occupies residues 859-886 (REKEAEKKEKSTTDWDDVVFEVDLLKSQ). Positions 886-1038 (QEINLDYILG…EKFKGVGGKI (153 aa)) are C-terminal domain.

This sequence belongs to the HsdR family. In terms of assembly, a monomer in solution. The type I restriction/modification system is composed of three polypeptides R, M and S; the restriction enzyme has stoichiometry R(2)M(2)S(1) while the methyltransferase is M(2)S(1). There is an equilibrium between R(2)M(2)S(1) and R(1)M(2)S(1); the latter is methylation and translocation proficient but restriction deficient. (Microbial infection) Holoenenzyme interacts with Escherichia phage T7 protein Ocr; this interaction leads to the inhibition of the restriction activity, but may still allow methylation and translocation.

The enzyme catalyses Endonucleolytic cleavage of DNA to give random double-stranded fragments with terminal 5'-phosphates, ATP is simultaneously hydrolyzed.. The restriction (R) subunit of a type I restriction enzyme that recognizes 5'-GAAN(6)RTCG-3' (for EcoR124I) and 5'-GAAN(7)RTCG-3' (for EcoR124II) and cleaves a random distance away. Subunit R is required for both nuclease and ATPase activities, but not for modification. After locating an unmethylated recognition site, the enzyme complex serves as a molecular motor that translocates DNA in an ATP-dependent manner until a collision occurs that triggers cleavage. The enzyme undergoes major structural changes to bring the motor domains into contact with DNA, allowing DNA translocation. This prevents DNA access to the catalytic domains of both the R and M subunits, preventing both restriction and methylation. The R(1)M(2)S(1) complex translocates an average of 555 bp/second on nicked DNA; the R(2)M(2)S(1) complex translocates at double that speed. The 2 R subunit motors are independent and track along the helical pitch of the DNA, inducing positive supercoiling ahead of themselves. The sequence is that of Type I restriction enzyme EcoR124I/EcoR124II endonuclease subunit from Escherichia coli.